The chain runs to 122 residues: Co-chaperonin GroES (122 aa).

This sequence belongs to the GroES chaperonin family. As to quaternary structure, heptamer of 7 subunits arranged in a ring. Interacts with the chaperonin GroEL.

It localises to the cytoplasm. Its function is as follows. Together with the chaperonin GroEL, plays an essential role in assisting protein folding. The GroEL-GroES system forms a nano-cage that allows encapsulation of the non-native substrate proteins and provides a physical environment optimized to promote and accelerate protein folding. GroES binds to the apical surface of the GroEL ring, thereby capping the opening of the GroEL channel. The protein is Co-chaperonin GroES of Aquifex aeolicus (strain VF5).